We begin with the raw amino-acid sequence, 642 residues long: Mini-chromosome maintenance complex-binding protein (642 aa).

Residues 151–161 (ARVSPSTSYTP) show a composition bias toward polar residues. The disordered stretch occupies residues 151–200 (ARVSPSTSYTPSRHKRSYEDDEDMDLQPNKQKDQHSGARQAGGLGGLHWR). Phosphoserine is present on Ser-154. Thr-160 carries the post-translational modification Phosphothreonine. 2 positions are modified to phosphoserine: Ser-167 and Ser-298.

It belongs to the MCMBP family. In terms of assembly, interacts with the MCM complex: associates with the MCM3-7 complex which lacks MCM2, while it does not interact with the MCM complex when MCM2 is present (MCM2-7 complex). Interacts with the RPA complex, when composed of all RPA1, RPA2 and RPA3 components, but not with RPA1 or RPA2 alone.

The protein resides in the nucleus. In terms of biological role, associated component of the MCM complex that acts as a regulator of DNA replication. Binds to the MCM complex during late S phase and promotes the disassembly of the MCM complex from chromatin, thereby acting as a key regulator of pre-replication complex (pre-RC) unloading from replicated DNA. Can dissociate the MCM complex without addition of ATP; probably acts by destabilizing interactions of each individual subunits of the MCM complex. Required for sister chromatid cohesion. The chain is Mini-chromosome maintenance complex-binding protein (Mcmbp) from Rattus norvegicus (Rat).